An 84-amino-acid polypeptide reads, in one-letter code: Large ribosomal subunit protein bL27 (84 aa).

This sequence belongs to the bacterial ribosomal protein bL27 family.

This chain is Large ribosomal subunit protein bL27, found in Buchnera aphidicola subsp. Acyrthosiphon pisum (strain Tuc7).